Reading from the N-terminus, the 255-residue chain is MDVEVKKNGKNAQLKDHEVKELIKQSQNGDQQARDLLIEKNMRLVWSVVQRFLNRGYEPDDLFQIGCIGLLKSVDKFDLTYDVRFSTYAVPMIIGEIQRFIRDDGTVKVSRSLKELGNKIRRAKDELSKTLGRVPTVQEIADHLEIEAEDVVLAQEAVRAPSSIHETVYENDGDPITLLDQIADNSEEKWFDKIALKEAISDLEEREKLIVYLRYYKDQTQSEVAERLGISQVQVSRLEKKILKQIKVQMDHTDG.

Positions 61-74 (DLFQIGCIGLLKSV) match the Polymerase core binding motif. A DNA-binding region (H-T-H motif) is located at residues 221–240 (QSEVAERLGISQVQVSRLEK).

This sequence belongs to the sigma-70 factor family. In terms of assembly, interacts transiently with the RNAP core.

With respect to regulation, interaction with SpoIIAB inhibits sigma-F activity throughout the cell before the formation of the asymmetric septum; after septation the interaction is confined to the mother cell, and sigma-F activity is released in the prespore. Fin, a second, forespore-specific anti-sigma factor is induced in 2 successive waves by sigma-F and sigma-G, by antagonizing sigma-F it allows the switch to sigma-G factor and progression to the late sporulation development stages. Its function is as follows. Sigma factors are initiation factors that promote the attachment of RNA polymerase to specific initiation sites and are then released. This sigma factor is responsible for the expression of sporulation specific genes. Interaction with SpoIIAB inhibits sigma-F activity throughout the cell before the formation of the asymmetric septum; after septation the interaction is confined to the mother cell, and sigma F activity is released in the prespore. Responsible for expression of csfB (the anti-sigma-G factor Gin). Associates with the RNAP core only in stationary phase cells. In Bacillus subtilis (strain 168), this protein is RNA polymerase sigma-F factor (sigF).